The following is a 248-amino-acid chain: Protein STPG4 (248 aa).

In terms of assembly, interacts with histone H3. Interacts with histone H4.

It is found in the cytoplasm. The protein resides in the nucleus. In terms of biological role, maternal factor that plays a role in epigenetic chromatin reprogramming during early development of the zygote. Involved in the regulation of gametic DNA demethylation by inducing the conversion of the modified genomic base 5-methylcytosine (5mC) into 5-hydroxymethylcytosine (5hmC). This Homo sapiens (Human) protein is Protein STPG4.